A 137-amino-acid polypeptide reads, in one-letter code: Drosulfakinins (137 aa).

A signal peptide spans 1 to 31 (MGLRSCTHFATLVIPLWALAFCFLVVVPVPA). Residues 32 to 74 (QTNLQTSKGDRRLQDLESNMGAESDQPNANLVRPSLSRFGDKR) constitute a propeptide that is removed on maturation. Phe81 carries the phenylalanine amide modification. A propeptide spanning residues 85-107 (VPRPMIPIELDLLMDNDDENTKA) is cleaved from the precursor. Tyr113 is modified (sulfotyrosine). Phe118 is modified (phenylalanine amide). Tyr130 bears the Sulfotyrosine mark. Phe135 bears the Phenylalanine amide mark.

It belongs to the gastrin/cholecystokinin family.

It localises to the secreted. Its function is as follows. Drosulfakinin-0 (DSK 0) plays diverse biological roles including regulating gut muscle contraction in adults but not in larvae. This Drosophila yakuba (Fruit fly) protein is Drosulfakinins.